A 190-amino-acid polypeptide reads, in one-letter code: MLEILKKSLKKAPIVKRGKYPYFIHPITDGVPAIDPKLLDEISDYIIEYSDMDVDRILSIEAMGIPLATAISLKTGIPFSIVRKRQYQLPGEIKISQSTGYSKGELYINGIEKGNRILLVDDVISTGGTLRFLVKALEEKGVTISDIIVIVGRGDGVQQLAGEGIRVKTLVDINVSEDGVSILEDTGETN.

The protein belongs to the purine/pyrimidine phosphoribosyltransferase family. Archaeal HPRT subfamily. Homodimer.

The protein resides in the cytoplasm. It carries out the reaction IMP + diphosphate = hypoxanthine + 5-phospho-alpha-D-ribose 1-diphosphate. The catalysed reaction is GMP + diphosphate = guanine + 5-phospho-alpha-D-ribose 1-diphosphate. Its pathway is purine metabolism; IMP biosynthesis via salvage pathway; IMP from hypoxanthine: step 1/1. In terms of biological role, catalyzes a salvage reaction resulting in the formation of IMP that is energically less costly than de novo synthesis. This Methanohalophilus mahii (strain ATCC 35705 / DSM 5219 / SLP) protein is Hypoxanthine/guanine phosphoribosyltransferase.